Reading from the N-terminus, the 343-residue chain is Heat-inducible transcription repressor HrcA (343 aa).

Belongs to the HrcA family.

In terms of biological role, negative regulator of class I heat shock genes (grpE-dnaK-dnaJ and groELS operons). Prevents heat-shock induction of these operons. In Phytoplasma mali (strain AT), this protein is Heat-inducible transcription repressor HrcA.